The following is a 426-amino-acid chain: Protein CgeD (426 aa).

It to B.subtilis spore coat polysaccharide biosynthesis protein SpsA.

May be involved in maturation of the outermost layer of the spore. This chain is Protein CgeD (cgeD), found in Bacillus subtilis (strain 168).